The following is a 62-amino-acid chain: Small ribosomal subunit protein bS21 (62 aa).

The span at 43 to 52 (VKKKLKSEAA) shows a compositional bias: basic and acidic residues. Residues 43–62 (VKKKLKSEAARKRKAKKKRF) form a disordered region. A compositionally biased stretch (basic residues) spans 53–62 (RKRKAKKKRF).

This sequence belongs to the bacterial ribosomal protein bS21 family.

This is Small ribosomal subunit protein bS21 from Levilactobacillus brevis (strain ATCC 367 / BCRC 12310 / CIP 105137 / JCM 1170 / LMG 11437 / NCIMB 947 / NCTC 947) (Lactobacillus brevis).